The sequence spans 375 residues: Arabinose metabolism transcriptional repressor (375 aa).

Positions 1–70 (METKYNFVKQ…QGAGTFCADR (70 aa)) constitute an HTH gntR-type domain. The segment at residues 30 to 49 (ENELMKEYNVSRHTVRKAID) is a DNA-binding region (H-T-H motif).

The protein localises to the cytoplasm. Its function is as follows. Transcriptional repressor of the arabinose utilization genes. This is Arabinose metabolism transcriptional repressor (araR) from Halalkalibacterium halodurans (strain ATCC BAA-125 / DSM 18197 / FERM 7344 / JCM 9153 / C-125) (Bacillus halodurans).